Reading from the N-terminus, the 273-residue chain is Dermonecrotic toxin LapSicTox-alphaIB1b2 (273 aa).

H5 is a catalytic residue. Mg(2+) is bound by residues E25 and D27. H41 (nucleophile) is an active-site residue. 2 cysteine pairs are disulfide-bonded: C45-C51 and C47-C190. A Mg(2+)-binding site is contributed by D85. N-linked (GlcNAc...) asparagine glycosylation is present at N250.

Belongs to the arthropod phospholipase D family. Class II subfamily. It depends on Mg(2+) as a cofactor. As to expression, expressed by the venom gland.

It is found in the secreted. It carries out the reaction an N-(acyl)-sphingosylphosphocholine = an N-(acyl)-sphingosyl-1,3-cyclic phosphate + choline. It catalyses the reaction an N-(acyl)-sphingosylphosphoethanolamine = an N-(acyl)-sphingosyl-1,3-cyclic phosphate + ethanolamine. The catalysed reaction is a 1-acyl-sn-glycero-3-phosphocholine = a 1-acyl-sn-glycero-2,3-cyclic phosphate + choline. The enzyme catalyses a 1-acyl-sn-glycero-3-phosphoethanolamine = a 1-acyl-sn-glycero-2,3-cyclic phosphate + ethanolamine. In terms of biological role, dermonecrotic toxins cleave the phosphodiester linkage between the phosphate and headgroup of certain phospholipids (sphingolipid and lysolipid substrates), forming an alcohol (often choline) and a cyclic phosphate. This toxin acts on sphingomyelin (SM). It may also act on ceramide phosphoethanolamine (CPE), lysophosphatidylcholine (LPC) and lysophosphatidylethanolamine (LPE), but not on lysophosphatidylserine (LPS), and lysophosphatidylglycerol (LPG). It acts by transphosphatidylation, releasing exclusively cyclic phosphate products as second products. Induces dermonecrosis, hemolysis, increased vascular permeability, edema, inflammatory response, and platelet aggregation. The chain is Dermonecrotic toxin LapSicTox-alphaIB1b2 from Loxosceles apachea (Apache recluse spider).